The primary structure comprises 524 residues: Nucleobase-ascorbate transporter 2 (524 aa).

12 helical membrane-spanning segments follow: residues 41 to 61, 69 to 89, 91 to 111, 133 to 153, 155 to 175, 179 to 199, 217 to 237, 282 to 302, 359 to 379, 380 to 400, 419 to 439, and 457 to 477; these read YILA…MMGG, VVQT…LFGT, LPTV…IIHD, GAII…MWAI, SRFF…FGLF, FPVV…FVIF, FALI…TASG, AFAM…AFKA, RVIQ…KFGA, LFAS…FGLV, LFIV…FRDF, and DFLN…AVFL.

The protein belongs to the nucleobase:cation symporter-2 (NCS2) (TC 2.A.40) family. Expressed in cotyledons 10 days after imbibition (DAI). Expressed in the minor and major veins of cotyledons and leaves, in the shoot apex and pedicels. Expressed in the root meristems, root tips and lateral root primordia.

It is found in the membrane. This chain is Nucleobase-ascorbate transporter 2 (NAT2), found in Arabidopsis thaliana (Mouse-ear cress).